The sequence spans 1343 residues: DNA-directed RNA polymerase subunit beta (1343 aa).

Belongs to the RNA polymerase beta chain family. In terms of assembly, the RNAP catalytic core consists of 2 alpha, 1 beta, 1 beta' and 1 omega subunit. When a sigma factor is associated with the core the holoenzyme is formed, which can initiate transcription.

The catalysed reaction is RNA(n) + a ribonucleoside 5'-triphosphate = RNA(n+1) + diphosphate. In terms of biological role, DNA-dependent RNA polymerase catalyzes the transcription of DNA into RNA using the four ribonucleoside triphosphates as substrates. The polypeptide is DNA-directed RNA polymerase subunit beta (Haemophilus influenzae (strain 86-028NP)).